The primary structure comprises 257 residues: Protein TONNEAU 1b (257 aa).

Residues 73-105 (SGRLLSALICEYLDWAQLNHTLKVYQPECNSAK) enclose the LisH domain. Disordered stretches follow at residues 148-216 (QVMG…EDMP) and 231-257 (LDRKTRNLTSSWRNVKDGTSEEEEGKD). The span at 187–199 (SVSASQASGAATS) shows a compositional bias: low complexity. 2 stretches are compositionally biased toward basic and acidic residues: residues 201–212 (YRKDESNWRYDT) and 244–257 (NVKDGTSEEEEGKD).

Interacts with CEN1, LNG1/TRM2 and LNG2/TRM1 (via C-terminus).

The protein localises to the cytoplasm. Its subcellular location is the cytoskeleton. Involved in the control of the dynamic organization of the cortical cytoskeleton. May play a role in the organization of microtubule arrays at the centrosome through interaction with centrin 1 (CEN1). In Arabidopsis thaliana (Mouse-ear cress), this protein is Protein TONNEAU 1b (TON1B).